The chain runs to 368 residues: Serine/threonine-protein phosphatase PP2A-like PPG1 (368 aa).

Mn(2+) is bound by residues D50, H52, D78, and N110. H111 functions as the Proton donor in the catalytic mechanism. Positions 161 and 247 each coordinate Mn(2+).

It belongs to the PPP phosphatase family. PP-2A subfamily. As to quaternary structure, inactivated in a complex with phosphatase methylesterase PPE1 (PP2Ai). Interacts with phosphatase 2A activator RRD1, which can reactivate PP2Ai by dissociating the catalytic subunit from the complex. Interacts with TAP42. Mn(2+) is required as a cofactor. In terms of processing, reversibly methyl esterified on Leu-368 by leucine carboxyl methyltransferase 1 (PPM1) and protein phosphatase methylesterase 1 (PPE1). Carboxyl methylation influences the affinity of the catalytic subunit for the different regulatory subunits, thereby modulating the PP2A holoenzyme's substrate specificity, enzyme activity and cellular localization.

The catalysed reaction is O-phospho-L-seryl-[protein] + H2O = L-seryl-[protein] + phosphate. It carries out the reaction O-phospho-L-threonyl-[protein] + H2O = L-threonyl-[protein] + phosphate. Involved in glycogen accumulation. The chain is Serine/threonine-protein phosphatase PP2A-like PPG1 (PPG1) from Saccharomyces cerevisiae (strain ATCC 204508 / S288c) (Baker's yeast).